Consider the following 213-residue polypeptide: MKSLQALFGGTFDPVHYGHLKPVETLANLIGLSRVIIMPNNVPPHRPQPEASSAQRKYMLELAIDDKPLFTLDERELQRNAPSYTAQTLKAWREEQGPEAPLAFIIGQDSLLNFPTWHDYDTILDNTHLIVCRRPGYPLEMTQAQHQQWLEQHLTHTPDDLHQLPAGKIYLAETPWLNISATLIRERLEKGESCDDLLPENVLNYINQQGLYR.

It belongs to the NadD family.

It carries out the reaction nicotinate beta-D-ribonucleotide + ATP + H(+) = deamido-NAD(+) + diphosphate. It functions in the pathway cofactor biosynthesis; NAD(+) biosynthesis; deamido-NAD(+) from nicotinate D-ribonucleotide: step 1/1. Its function is as follows. Catalyzes the reversible adenylation of nicotinate mononucleotide (NaMN) to nicotinic acid adenine dinucleotide (NaAD). This chain is Probable nicotinate-nucleotide adenylyltransferase, found in Salmonella gallinarum (strain 287/91 / NCTC 13346).